Here is a 205-residue protein sequence, read N- to C-terminus: Small ribosomal subunit protein uS4 (205 aa).

The span at 1 to 16 (MSKRESSKYKIDRRMG) shows a compositional bias: basic and acidic residues. The tract at residues 1-46 (MSKRESSKYKIDRRMGENIWGRPKSPVNRREYGPGQHGQRRKSKLS) is disordered. The 64-residue stretch at 94–157 (SRLDAIVYRA…KQLVTVLEAV (64 aa)) folds into the S4 RNA-binding domain.

This sequence belongs to the universal ribosomal protein uS4 family. Part of the 30S ribosomal subunit. Contacts protein S5. The interaction surface between S4 and S5 is involved in control of translational fidelity.

In terms of biological role, one of the primary rRNA binding proteins, it binds directly to 16S rRNA where it nucleates assembly of the body of the 30S subunit. With S5 and S12 plays an important role in translational accuracy. This Rhizobium meliloti (strain 1021) (Ensifer meliloti) protein is Small ribosomal subunit protein uS4.